Consider the following 260-residue polypeptide: Isoprenyl transferase (260 aa).

Asp40 is a catalytic residue. Residue Asp40 participates in Mg(2+) binding. Residues 41-44 (GNGR), Trp45, Arg53, His57, and 85-87 (STE) each bind substrate. The Proton acceptor role is filled by Asn88. Residues Trp89, Arg91, Arg208, and 214–216 (RLS) each bind substrate. Glu227 contributes to the Mg(2+) binding site.

The protein belongs to the UPP synthase family. In terms of assembly, homodimer. Mg(2+) is required as a cofactor.

Catalyzes the condensation of isopentenyl diphosphate (IPP) with allylic pyrophosphates generating different type of terpenoids. The protein is Isoprenyl transferase of Bacillus subtilis (strain 168).